A 1723-amino-acid chain; its full sequence is Probable outer membrane protein pmp20 (1723 aa).

A signal peptide spans 1 to 21 (MKWLPATAVFAAVLPALTAFG). 2 disordered regions span residues 78–100 (VTPD…SGAT) and 139–161 (LSSS…SASA). Low complexity-rich tracts occupy residues 85–100 (SSSN…SGAT) and 140–161 (SSSS…SASA). The region spanning 1434 to 1723 (EDPAFNNFWA…MANGGIRFVF (290 aa)) is the Autotransporter domain.

Belongs to the PMP outer membrane protein family.

Its subcellular location is the secreted. It is found in the cell wall. It localises to the cell outer membrane. In Chlamydia pneumoniae (Chlamydophila pneumoniae), this protein is Probable outer membrane protein pmp20 (pmp20).